Reading from the N-terminus, the 259-residue chain is HTH-type transcriptional regulator Rv1719 (259 aa).

The region spanning 13–75 (IQVIARAAEL…GARGPYRLGP (63 aa)) is the HTH iclR-type domain. Residues 35-54 (QAEIGERVGMARSTVSRILN) constitute a DNA-binding region (H-T-H motif). The region spanning 88-259 (VVTEMHPFLT…AWFNGTEDRK (172 aa)) is the IclR-ED domain.

Homodimer.

Its function is as follows. Binds to the upstream region of Rv1714 and probably modulates the expression of the downstream gene(s). This chain is HTH-type transcriptional regulator Rv1719, found in Mycobacterium tuberculosis (strain ATCC 25618 / H37Rv).